Consider the following 364-residue polypeptide: Chaperone protein DnaJ (364 aa).

A J domain is found at 4–69 (DYYEILGLSK…NKKAKYDRFG (66 aa)). The CR-type zinc-finger motif lies at 135–213 (GYKNNINITR…CKGKGRITNQ (79 aa)). Residues Cys148, Cys151, Cys165, Cys168, Cys187, Cys190, Cys201, and Cys204 each coordinate Zn(2+). 4 CXXCXGXG motif repeats span residues 148–155 (CHSCLGKK), 165–172 (CNMCNGSG), 187–194 (CSKCYGEG), and 201–208 (CKSCKGKG).

The protein belongs to the DnaJ family. Homodimer. The cofactor is Zn(2+).

It localises to the cytoplasm. In terms of biological role, participates actively in the response to hyperosmotic and heat shock by preventing the aggregation of stress-denatured proteins and by disaggregating proteins, also in an autonomous, DnaK-independent fashion. Unfolded proteins bind initially to DnaJ; upon interaction with the DnaJ-bound protein, DnaK hydrolyzes its bound ATP, resulting in the formation of a stable complex. GrpE releases ADP from DnaK; ATP binding to DnaK triggers the release of the substrate protein, thus completing the reaction cycle. Several rounds of ATP-dependent interactions between DnaJ, DnaK and GrpE are required for fully efficient folding. Also involved, together with DnaK and GrpE, in the DNA replication of plasmids through activation of initiation proteins. The protein is Chaperone protein DnaJ of Borrelia garinii subsp. bavariensis (strain ATCC BAA-2496 / DSM 23469 / PBi) (Borreliella bavariensis).